Reading from the N-terminus, the 232-residue chain is Putative uridine kinase DAS2 (232 aa).

An ATP-binding site is contributed by 17 to 24; it reads GGHATGVG.

This sequence belongs to the uridine kinase family.

The protein resides in the cytoplasm. It is found in the nucleus. The catalysed reaction is uridine + ATP = UMP + ADP + H(+). The enzyme catalyses cytidine + ATP = CMP + ADP + H(+). It participates in pyrimidine metabolism; CTP biosynthesis via salvage pathway; CTP from cytidine: step 1/3. Its pathway is pyrimidine metabolism; UMP biosynthesis via salvage pathway; UMP from uridine: step 1/1. Functionally, putative uridine kinase identified in a screen for mutants with increased levels of rDNA transcription. The polypeptide is Putative uridine kinase DAS2 (DAS2) (Saccharomyces cerevisiae (strain ATCC 204508 / S288c) (Baker's yeast)).